Consider the following 260-residue polypeptide: Pectate lyase H (260 aa).

A signal peptide spans M1–A17.

The protein belongs to the polysaccharide lyase 3 family. It depends on Ca(2+) as a cofactor.

The protein localises to the secreted. The enzyme catalyses Eliminative cleavage of (1-&gt;4)-alpha-D-galacturonan to give oligosaccharides with 4-deoxy-alpha-D-galact-4-enuronosyl groups at their non-reducing ends.. Pectinolytic enzyme consist of four classes of enzymes: pectin lyase, polygalacturonase, pectin methylesterase and rhamnogalacturonase. Among pectinolytic enzymes, pectin lyase is the most important in depolymerization of pectin, since it cleaves internal glycosidic bonds of highly methylated pectins. Favors pectate, the anion, over pectin, the methyl ester. This Emericella nidulans (strain FGSC A4 / ATCC 38163 / CBS 112.46 / NRRL 194 / M139) (Aspergillus nidulans) protein is Pectate lyase H (plyH).